Here is a 530-residue protein sequence, read N- to C-terminus: Bifunctional purine biosynthesis protein PurH (530 aa).

An MGS-like domain is found at 1–148 (MENSRPIKRA…KNHKDVGIVV (148 aa)).

Belongs to the PurH family.

It carries out the reaction (6R)-10-formyltetrahydrofolate + 5-amino-1-(5-phospho-beta-D-ribosyl)imidazole-4-carboxamide = 5-formamido-1-(5-phospho-D-ribosyl)imidazole-4-carboxamide + (6S)-5,6,7,8-tetrahydrofolate. The enzyme catalyses IMP + H2O = 5-formamido-1-(5-phospho-D-ribosyl)imidazole-4-carboxamide. It functions in the pathway purine metabolism; IMP biosynthesis via de novo pathway; 5-formamido-1-(5-phospho-D-ribosyl)imidazole-4-carboxamide from 5-amino-1-(5-phospho-D-ribosyl)imidazole-4-carboxamide (10-formyl THF route): step 1/1. It participates in purine metabolism; IMP biosynthesis via de novo pathway; IMP from 5-formamido-1-(5-phospho-D-ribosyl)imidazole-4-carboxamide: step 1/1. This chain is Bifunctional purine biosynthesis protein PurH, found in Psychromonas ingrahamii (strain DSM 17664 / CCUG 51855 / 37).